The primary structure comprises 397 residues: DNA-directed RNA polymerase subunit Rpo1C (397 aa).

The protein belongs to the RNA polymerase beta' chain family. Part of the RNA polymerase complex.

It is found in the cytoplasm. It catalyses the reaction RNA(n) + a ribonucleoside 5'-triphosphate = RNA(n+1) + diphosphate. Functionally, DNA-dependent RNA polymerase (RNAP) catalyzes the transcription of DNA into RNA using the four ribonucleoside triphosphates as substrates. Forms part of the jaw domain. This Pyrococcus horikoshii (strain ATCC 700860 / DSM 12428 / JCM 9974 / NBRC 100139 / OT-3) protein is DNA-directed RNA polymerase subunit Rpo1C.